Here is a 222-residue protein sequence, read N- to C-terminus: Large ribosomal subunit protein mL64 (222 aa).

Disordered stretches follow at residues 19–46 and 188–222; these read APGS…EDLL and KRLK…APSS. Residues 25–36 show a composition bias toward basic residues; sequence YRARPPPRRRPG. Positions 99–212 form a coiled coil; sequence MQESLRVKQL…AAALAAAVAQ (114 aa). The short motif at 184-200 is the Nuclear localization signal element; the sequence is KKERKRLKEEKQKRKKE. Over residues 203–212 the composition is skewed to low complexity; it reads AAALAAAVAQ.

This sequence belongs to the mitochondrion-specific ribosomal protein mL64 family. As to quaternary structure, component of the mitochondrial large ribosomal subunit (mt-LSU). Mature mammalian 55S mitochondrial ribosomes consist of a small (28S) and a large (39S) subunit. The 28S small subunit contains a 12S ribosomal RNA (12S mt-rRNA) and 30 different proteins. The 39S large subunit contains a 16S rRNA (16S mt-rRNA), a copy of mitochondrial valine transfer RNA (mt-tRNA(Val)), which plays an integral structural role, and 52 different proteins. Interacts with GADD45A, GADD45B and GADD45G. Interacts with NR4A1 via the NR4A1 AB domain. Interacts with ATAD3A and ATAD3B. In terms of assembly, (Microbial infection) Interacts with the human papilloma virus type 16 (HPV 16) minor capsid protein L2. Widely expressed. Highly expressed in the thyroid gland, heart, lymph nodes, trachea and adrenal tissues. Expressed at lower level in liver skeletal muscle, kidney, pancreas, testis, ovary and stomach. Barely detectable in adrenal adenoma and papillary thyroid cancer.

The protein resides in the mitochondrion. It localises to the nucleus. Its function is as follows. Acts as a negative regulator of G1 to S cell cycle phase progression by inhibiting cyclin-dependent kinases. Inhibitory effects are additive with GADD45 proteins but also occur in the absence of GADD45 proteins. Acts as a repressor of the orphan nuclear receptor NR4A1 by inhibiting AB domain-mediated transcriptional activity. May be involved in the hormone-mediated regulation of NR4A1 transcriptional activity. May play a role in mitochondrial protein synthesis. The sequence is that of Large ribosomal subunit protein mL64 (GADD45GIP1) from Homo sapiens (Human).